A 257-amino-acid polypeptide reads, in one-letter code: 3-deoxy-manno-octulosonate cytidylyltransferase (257 aa).

The protein belongs to the KdsB family.

It is found in the cytoplasm. The enzyme catalyses 3-deoxy-alpha-D-manno-oct-2-ulosonate + CTP = CMP-3-deoxy-beta-D-manno-octulosonate + diphosphate. It functions in the pathway nucleotide-sugar biosynthesis; CMP-3-deoxy-D-manno-octulosonate biosynthesis; CMP-3-deoxy-D-manno-octulosonate from 3-deoxy-D-manno-octulosonate and CTP: step 1/1. It participates in bacterial outer membrane biogenesis; lipopolysaccharide biosynthesis. Its function is as follows. Activates KDO (a required 8-carbon sugar) for incorporation into bacterial lipopolysaccharide in Gram-negative bacteria. In Halorhodospira halophila (strain DSM 244 / SL1) (Ectothiorhodospira halophila (strain DSM 244 / SL1)), this protein is 3-deoxy-manno-octulosonate cytidylyltransferase.